The primary structure comprises 91 residues: Cell division topological specificity factor (91 aa).

The protein belongs to the MinE family.

Functionally, prevents the cell division inhibition by proteins MinC and MinD at internal division sites while permitting inhibition at polar sites. This ensures cell division at the proper site by restricting the formation of a division septum at the midpoint of the long axis of the cell. The sequence is that of Cell division topological specificity factor from Chloroflexus aggregans (strain MD-66 / DSM 9485).